The sequence spans 827 residues: Periplasmic nitrate reductase (827 aa).

Residues 1-34 (MSLTRRDFIKANAVPATAAAAGLATPAIAQPAKA) constitute a signal peptide (tat-type signal). The 57-residue stretch at 36-92 (IRWDKGVCRFCGTGCSVLVGVQDGRVVATQGDPDSPVNRGLNCIKGYFLSKIMYGED) folds into the 4Fe-4S Mo/W bis-MGD-type domain. Residues Cys43, Cys46, Cys50, and Cys78 each contribute to the [4Fe-4S] cluster site. Mo-bis(molybdopterin guanine dinucleotide) is bound by residues Lys80, Gln148, Asn173, Cys177, 210-217 (WGSNMAEM), 241-245 (STFEH), 260-262 (QTD), Met371, Gln375, Asn481, 507-508 (SD), Lys530, Asp557, and 717-726 (TGRVLEHWHS). Phe793 is a binding site for substrate. Mo-bis(molybdopterin guanine dinucleotide) is bound by residues Asn801 and Lys818.

It belongs to the prokaryotic molybdopterin-containing oxidoreductase family. NasA/NapA/NarB subfamily. Component of the periplasmic nitrate reductase NapAB complex composed of NapA and NapB. It depends on [4Fe-4S] cluster as a cofactor. The cofactor is Mo-bis(molybdopterin guanine dinucleotide). Post-translationally, predicted to be exported by the Tat system. The position of the signal peptide cleavage has not been experimentally proven.

The protein localises to the periplasm. It catalyses the reaction 2 Fe(II)-[cytochrome] + nitrate + 2 H(+) = 2 Fe(III)-[cytochrome] + nitrite + H2O. Catalytic subunit of the periplasmic nitrate reductase complex NapAB. Receives electrons from NapB and catalyzes the reduction of nitrate to nitrite. In Paramagnetospirillum magnetotacticum (Aquaspirillum magnetotacticum), this protein is Periplasmic nitrate reductase.